We begin with the raw amino-acid sequence, 294 residues long: Uracil-DNA glycosylase (294 aa).

Residue aspartate 139 is the Proton acceptor of the active site.

It belongs to the uracil-DNA glycosylase (UDG) superfamily. UNG family.

It localises to the host nucleus. The catalysed reaction is Hydrolyzes single-stranded DNA or mismatched double-stranded DNA and polynucleotides, releasing free uracil.. Its function is as follows. Excises uracil residues from the DNA which can arise as a result of misincorporation of dUMP residues by DNA polymerase or deamination of cytosines. Therefore may reduce deleterious uracil incorporation into the viral genome, particularly in terminally differentiated cells which lack DNA repair enzymes. This Human herpesvirus 2 (strain 333) (HHV-2) protein is Uracil-DNA glycosylase (UL2).